The chain runs to 215 residues: Probable transaldolase (215 aa).

The Schiff-base intermediate with substrate role is filled by Lys-83.

This sequence belongs to the transaldolase family. Type 3B subfamily.

It localises to the cytoplasm. It carries out the reaction D-sedoheptulose 7-phosphate + D-glyceraldehyde 3-phosphate = D-erythrose 4-phosphate + beta-D-fructose 6-phosphate. The protein operates within carbohydrate degradation; pentose phosphate pathway; D-glyceraldehyde 3-phosphate and beta-D-fructose 6-phosphate from D-ribose 5-phosphate and D-xylulose 5-phosphate (non-oxidative stage): step 2/3. Functionally, transaldolase is important for the balance of metabolites in the pentose-phosphate pathway. The sequence is that of Probable transaldolase from Streptococcus agalactiae serotype III (strain NEM316).